The chain runs to 271 residues: Tryptophan synthase alpha chain (271 aa).

Catalysis depends on proton acceptor residues E47 and D58.

This sequence belongs to the TrpA family. As to quaternary structure, tetramer of two alpha and two beta chains.

The enzyme catalyses (1S,2R)-1-C-(indol-3-yl)glycerol 3-phosphate + L-serine = D-glyceraldehyde 3-phosphate + L-tryptophan + H2O. It participates in amino-acid biosynthesis; L-tryptophan biosynthesis; L-tryptophan from chorismate: step 5/5. Its function is as follows. The alpha subunit is responsible for the aldol cleavage of indoleglycerol phosphate to indole and glyceraldehyde 3-phosphate. This is Tryptophan synthase alpha chain from Thermus thermophilus (strain ATCC BAA-163 / DSM 7039 / HB27).